The sequence spans 493 residues: 3-octaprenyl-4-hydroxybenzoate carboxy-lyase (493 aa).

Residue Asn-172 participates in Mn(2+) binding. Residues 175–177 (IYR), 189–191 (RWL), and 194–195 (RG) contribute to the prenylated FMN site. A Mn(2+)-binding site is contributed by Glu-238. Catalysis depends on Asp-287, which acts as the Proton donor.

The protein belongs to the UbiD family. As to quaternary structure, homohexamer. Prenylated FMN serves as cofactor. It depends on Mn(2+) as a cofactor.

The protein resides in the cell membrane. It carries out the reaction a 4-hydroxy-3-(all-trans-polyprenyl)benzoate + H(+) = a 2-(all-trans-polyprenyl)phenol + CO2. It functions in the pathway cofactor biosynthesis; ubiquinone biosynthesis. Functionally, catalyzes the decarboxylation of 3-octaprenyl-4-hydroxy benzoate to 2-octaprenylphenol, an intermediate step in ubiquinone biosynthesis. The polypeptide is 3-octaprenyl-4-hydroxybenzoate carboxy-lyase (Shewanella halifaxensis (strain HAW-EB4)).